The chain runs to 85 residues: Large ribosomal subunit protein bL27 (85 aa).

Positions 1–10 (MAQKKGGGST) are enriched in gly residues. Residues 1-20 (MAQKKGGGSTRNGRDSQPKM) are disordered.

This sequence belongs to the bacterial ribosomal protein bL27 family.

This is Large ribosomal subunit protein bL27 from Methylibium petroleiphilum (strain ATCC BAA-1232 / LMG 22953 / PM1).